The sequence spans 392 residues: Succinate--CoA ligase [ADP-forming] subunit beta (392 aa).

Residues 9–248 enclose the ATP-grasp domain; the sequence is KDILRKFGVA…ISEEDPFEVE (240 aa). ATP-binding positions include Lys-50, 57–59, Glu-103, Met-106, and Glu-111; that span reads GRG. 2 residues coordinate Mg(2+): Asn-203 and Asp-217. Substrate is bound by residues Asn-268 and 325–327; that span reads GIV.

It belongs to the succinate/malate CoA ligase beta subunit family. In terms of assembly, heterotetramer of two alpha and two beta subunits. The cofactor is Mg(2+).

The catalysed reaction is succinate + ATP + CoA = succinyl-CoA + ADP + phosphate. It catalyses the reaction GTP + succinate + CoA = succinyl-CoA + GDP + phosphate. Its pathway is carbohydrate metabolism; tricarboxylic acid cycle; succinate from succinyl-CoA (ligase route): step 1/1. In terms of biological role, succinyl-CoA synthetase functions in the citric acid cycle (TCA), coupling the hydrolysis of succinyl-CoA to the synthesis of either ATP or GTP and thus represents the only step of substrate-level phosphorylation in the TCA. The beta subunit provides nucleotide specificity of the enzyme and binds the substrate succinate, while the binding sites for coenzyme A and phosphate are found in the alpha subunit. The polypeptide is Succinate--CoA ligase [ADP-forming] subunit beta (Chlorobium phaeobacteroides (strain DSM 266 / SMG 266 / 2430)).